A 221-amino-acid chain; its full sequence is Ribose-5-phosphate isomerase A (221 aa).

Substrate contacts are provided by residues 26–29 (TGST), 81–84 (DGAD), and 94–97 (KGGG). Residue Glu-103 is the Proton acceptor of the active site. A substrate-binding site is contributed by Lys-121.

The protein belongs to the ribose 5-phosphate isomerase family. As to quaternary structure, homodimer.

It carries out the reaction aldehydo-D-ribose 5-phosphate = D-ribulose 5-phosphate. The protein operates within carbohydrate degradation; pentose phosphate pathway; D-ribose 5-phosphate from D-ribulose 5-phosphate (non-oxidative stage): step 1/1. Its function is as follows. Catalyzes the reversible conversion of ribose-5-phosphate to ribulose 5-phosphate. The sequence is that of Ribose-5-phosphate isomerase A from Bacillus mycoides (strain KBAB4) (Bacillus weihenstephanensis).